We begin with the raw amino-acid sequence, 288 residues long: Small ribosomal subunit protein uS3 (288 aa).

In terms of domain architecture, KH type-2 spans 38-106; the sequence is IRRMMSKGLE…QVQLNIIEVK (69 aa). The tract at residues 209–288 is disordered; that stretch reads PGRETPAEAP…TQPAETQQEG (80 aa). Positions 219–232 are enriched in basic and acidic residues; it reads SRPRRERGDRSERP. Positions 249–264 are enriched in low complexity; the sequence is AGRAAATTIAQAAETP. Over residues 277–288 the composition is skewed to polar residues; the sequence is AATQPAETQQEG.

The protein belongs to the universal ribosomal protein uS3 family. As to quaternary structure, part of the 30S ribosomal subunit. Forms a tight complex with proteins S10 and S14.

Its function is as follows. Binds the lower part of the 30S subunit head. Binds mRNA in the 70S ribosome, positioning it for translation. This is Small ribosomal subunit protein uS3 from Salinispora arenicola (strain CNS-205).